The primary structure comprises 90 residues: Small ribosomal subunit protein bS16 (90 aa).

It belongs to the bacterial ribosomal protein bS16 family.

The sequence is that of Small ribosomal subunit protein bS16 from Streptococcus gordonii (strain Challis / ATCC 35105 / BCRC 15272 / CH1 / DL1 / V288).